The sequence spans 378 residues: Probable selenide, water dikinase (378 aa).

The active site involves C33. Residues K36, 63–65, D83, D106, and 158–160 each bind ATP; these read GLD and GQT. D65 provides a ligand contact to Mg(2+). Residue D106 coordinates Mg(2+). A Mg(2+)-binding site is contributed by D260.

It belongs to the selenophosphate synthase 1 family. Class I subfamily. In terms of assembly, homodimer. Mg(2+) is required as a cofactor.

It catalyses the reaction hydrogenselenide + ATP + H2O = selenophosphate + AMP + phosphate + 2 H(+). Functionally, synthesizes selenophosphate from selenide and ATP. This Caenorhabditis elegans protein is Probable selenide, water dikinase (seld-1).